Consider the following 421-residue polypeptide: AA11 family lytic polysaccharide monooxygenase (421 aa).

A signal peptide spans 1–19; that stretch reads MFSKAFLSAALLGAAAVEG. Cu(+) contacts are provided by His-20, His-79, and Glu-93. Intrachain disulfides connect Cys-48/Cys-162, Cys-84/Cys-110, and Cys-201/Cys-235. A glycan (N-linked (GlcNAc...) asparagine) is linked at Asn-117. A disordered region spans residues 231–349; sequence GSQACTGTPT…SSSSSSSGAL (119 aa). The segment covering 247-285 has biased composition (low complexity); sequence TAGSSGSSGSSSGSSSGGSSSSAAGSGATAPPAPAVSST. Positions 304–314 are enriched in polar residues; sequence SPAQPTHTSAP. Residues 315–349 show a composition bias toward low complexity; it reads SGGSSSGSGSSSGSNSGSSSGSSSSSSSSSSSGAL.

It belongs to the polysaccharide monooxygenase AA11 family. Cu(2+) is required as a cofactor.

Functionally, lytic polysaccharide monooxygenase (LPMO) that depolymerizes chitin via the oxidation of scissile beta-(1-4)-glycosidic bonds, yielding C1 or C4 oxidation products. Catalysis by LPMOs requires the reduction of the active-site copper from Cu(II) to Cu(I) by a reducing agent and H(2)O(2) or O(2) as a cosubstrate. Active on chitin but has no activity on other substrates, including diverse mannans, cellulose and starch (data not shown). Primary chain cleavage yields predominantly aldonic acid oligosaccharides with even-numbered degrees of polymerization. The protein is AA11 family lytic polysaccharide monooxygenase of Aspergillus oryzae (strain ATCC 42149 / RIB 40) (Yellow koji mold).